The chain runs to 935 residues: Epstein-Barr nuclear antigen 3 (935 aa).

5 disordered regions span residues 1-89 (MDKD…DLPG), 342-373 (HVEGATGETREESEDTESDGDDEDLPCIVSRG), 399-446 (TEQG…VPEP), 611-634 (KQASVEVQPPQVTQVSPQQPMEGP), and 883-908 (HGRPRPRTPEWPVQGESGQNVTDHEP). A compositionally biased stretch (acidic residues) spans 10–19 (ALDDNMEEEV). The segment covering 20–29 (PSTSVVQEQV) has biased composition (polar residues). Over residues 352 to 366 (EESEDTESDGDDEDL) the composition is skewed to acidic residues. Over residues 399–410 (TEQGKEVLEKAR) the composition is skewed to basic and acidic residues. The span at 431–440 (SDETATSHGS) shows a compositional bias: polar residues. Low complexity predominate over residues 615–630 (VEVQPPQVTQVSPQQP).

Belongs to the herpesviridae EBNA-3 family. As to quaternary structure, interacts with human UCKL1. Interacts with host CTPB1; this interaction seems important for EBNA3-mediated transcriptional repression. Interacts with host RBPJ. Interacts with host USP12 and WDR48; these interactions form a deubiquitination-competent complex.

The protein localises to the host nucleus matrix. In terms of biological role, plays an essential role for activation and immortalization of human B-cells. Represses transcription of viral promoters TP1 and Cp through interaction with host RBPJ, and inhibits EBNA2-mediated activation of these promoters. Since Cp is the promoter for all EBNA mRNAs, EBNA3A probably contributes to a negative autoregulatory control loop. This chain is Epstein-Barr nuclear antigen 3 (EBNA3), found in Homo sapiens (Human).